Reading from the N-terminus, the 1395-residue chain is uncharacterized protein (1395 aa).

An ATP-binding site is contributed by 89-96 (AYKKWGKS). 2 disordered regions span residues 146–166 (EEKIHKKLEGSPSPEAELSPP) and 205–391 (SSSS…MENR). Low complexity-rich tracts occupy residues 155-166 (GSPSPEAELSPP) and 205-222 (SSSSSSTAPPASTDTSSP). Residues 230-269 (EVTKERSSEVPTTVHEKTQSKSKNEKENKFSNGTIEEKPA) show a composition bias toward basic and acidic residues. Low complexity predominate over residues 287–301 (SWSSGSSEAGSSSSG). Residues 313-328 (VKVRHKAREIRNKKGR) show a composition bias toward basic residues. Over residues 337–346 (KHGEKAERNI) the composition is skewed to basic and acidic residues. The segment covering 349-358 (GSSSSSSSGS) has biased composition (low complexity). The span at 369 to 391 (PLKEIGRKDPGSTEGKDLYMENR) shows a compositional bias: basic and acidic residues. Residues Ser-814 and Ser-1080 each carry the phosphoserine modification. The interval 1110-1132 (PISASELSPGGGSESEFESEKDE) is disordered. Ser-1194 and Ser-1338 each carry phosphoserine. The segment covering 1346 to 1359 (TGERDSGAKSDGFR) has biased composition (basic and acidic residues). The disordered stretch occupies residues 1346-1395 (TGERDSGAKSDGFRGKMCSSASSTSEETGSEGGGEWVGPSEEELFSRTHL).

This is an uncharacterized protein from Homo sapiens (Human).